A 467-amino-acid chain; its full sequence is Light-independent protochlorophyllide reductase subunit N (467 aa).

[4Fe-4S] cluster contacts are provided by cysteine 22, cysteine 47, and cysteine 107.

Belongs to the BchN/ChlN family. In terms of assembly, protochlorophyllide reductase is composed of three subunits; ChlL, ChlN and ChlB. Forms a heterotetramer of two ChlB and two ChlN subunits. The cofactor is [4Fe-4S] cluster.

The protein resides in the plastid. It is found in the chloroplast. It carries out the reaction chlorophyllide a + oxidized 2[4Fe-4S]-[ferredoxin] + 2 ADP + 2 phosphate = protochlorophyllide a + reduced 2[4Fe-4S]-[ferredoxin] + 2 ATP + 2 H2O. The protein operates within porphyrin-containing compound metabolism; chlorophyll biosynthesis (light-independent). In terms of biological role, component of the dark-operative protochlorophyllide reductase (DPOR) that uses Mg-ATP and reduced ferredoxin to reduce ring D of protochlorophyllide (Pchlide) to form chlorophyllide a (Chlide). This reaction is light-independent. The NB-protein (ChlN-ChlB) is the catalytic component of the complex. This Chara vulgaris (Common stonewort) protein is Light-independent protochlorophyllide reductase subunit N.